The sequence spans 66 residues: Large ribosomal subunit protein bL35 (66 aa).

2 stretches are compositionally biased toward basic residues: residues 1–16 (MPKQKTHRGLAKRVKR) and 23–45 (KRGRAFTSHRFHGKTKKQRRQLR). The disordered stretch occupies residues 1 to 53 (MPKQKTHRGLAKRVKRTGGGGLKRGRAFTSHRFHGKTKKQRRQLRKASMVAKG).

This sequence belongs to the bacterial ribosomal protein bL35 family.

In Enterococcus faecalis (strain ATCC 700802 / V583), this protein is Large ribosomal subunit protein bL35.